Reading from the N-terminus, the 198-residue chain is Large ribosomal subunit protein uL23c (198 aa).

Residues 1-76 (MATTAPNLHS…SFGRDLMVAQ (76 aa)) constitute a chloroplast transit peptide.

This sequence belongs to the universal ribosomal protein uL23 family. Component of the chloroplast large ribosomal subunit (LSU). Mature 70S chloroplast ribosomes of higher plants consist of a small (30S) and a large (50S) subunit. The 30S small subunit contains 1 molecule of ribosomal RNA (16S rRNA) and 24 different proteins. The 50S large subunit contains 3 rRNA molecules (23S, 5S and 4.5S rRNA) and 33 different proteins.

The protein localises to the plastid. It is found in the chloroplast. Its function is as follows. Component of the chloroplast ribosome (chloro-ribosome), a dedicated translation machinery responsible for the synthesis of chloroplast genome-encoded proteins, including proteins of the transcription and translation machinery and components of the photosynthetic apparatus. The sequence is that of Large ribosomal subunit protein uL23c (RPL23) from Spinacia oleracea (Spinach).